The sequence spans 590 residues: Sperm-associated microtubule inner protein 4 (590 aa).

Phosphothreonine is present on Thr219. Phosphoserine is present on residues Ser407 and Ser422. A Glycyl lysine isopeptide (Lys-Gly) (interchain with G-Cter in SUMO2) cross-link involves residue Lys427. Tyr442 carries the post-translational modification Phosphotyrosine. A Phosphoserine modification is found at Ser485. Lys545 is covalently cross-linked (Glycyl lysine isopeptide (Lys-Gly) (interchain with G-Cter in SUMO2)). Position 547 is a phosphoserine (Ser547).

Predominantly expressed in the testes.

The protein resides in the cytoplasm. It is found in the cytoskeleton. The protein localises to the microtubule organizing center. Its subcellular location is the centrosome. It localises to the flagellum axoneme. Microtubule inner protein (MIP) part of the dynein-decorated doublet microtubules (DMTs) in flagellum axoneme. May serve to reinforce and thus stabilize the microtubule structure in the sperm flagella. The chain is Sperm-associated microtubule inner protein 4 from Homo sapiens (Human).